A 586-amino-acid chain; its full sequence is Maltogenic alpha-amylase (586 aa).

Residues asparagine 147, asparagine 152, aspartate 153, glycine 172, and aspartate 174 each contribute to the Ca(2+) site. Residues histidine 247 and arginine 326 each coordinate substrate. Residue aspartate 328 is the Nucleophile of the active site. Glutamate 357 (proton donor) is an active-site residue. Substrate-binding positions include histidine 423–aspartate 424, aspartate 468, and arginine 472.

It belongs to the glycosyl hydrolase 13 family. Ca(2+) is required as a cofactor.

The catalysed reaction is hydrolysis of (1-&gt;4)-alpha-D-glucosidic linkages in polysaccharides so as to remove successive alpha-maltose residues from the non-reducing ends of the chains.. Converts starch into maltose. The chain is Maltogenic alpha-amylase from Bacillus acidopullulyticus.